The primary structure comprises 365 residues: Putative clathrin assembly protein At4g40080 (365 aa).

An ENTH domain is found at asparagine 29 to isoleucine 167.

It is found in the membrane. It localises to the clathrin-coated pit. Its subcellular location is the golgi apparatus. The protein localises to the cytoplasmic vesicle. The protein resides in the clathrin-coated vesicle. In Arabidopsis thaliana (Mouse-ear cress), this protein is Putative clathrin assembly protein At4g40080.